Reading from the N-terminus, the 419-residue chain is UDP-N-acetylglucosamine 1-carboxyvinyltransferase (419 aa).

A phosphoenolpyruvate-binding site is contributed by 22–23 (KN). Arginine 91 contacts UDP-N-acetyl-alpha-D-glucosamine. Cysteine 115 serves as the catalytic Proton donor. Residue cysteine 115 is modified to 2-(S-cysteinyl)pyruvic acid O-phosphothioketal. Residues 120–124 (RPVDL), 160–163 (KVSV), aspartate 305, and isoleucine 327 contribute to the UDP-N-acetyl-alpha-D-glucosamine site.

This sequence belongs to the EPSP synthase family. MurA subfamily.

The protein localises to the cytoplasm. The enzyme catalyses phosphoenolpyruvate + UDP-N-acetyl-alpha-D-glucosamine = UDP-N-acetyl-3-O-(1-carboxyvinyl)-alpha-D-glucosamine + phosphate. It participates in cell wall biogenesis; peptidoglycan biosynthesis. Its function is as follows. Cell wall formation. Adds enolpyruvyl to UDP-N-acetylglucosamine. The sequence is that of UDP-N-acetylglucosamine 1-carboxyvinyltransferase from Cronobacter sakazakii (strain ATCC BAA-894) (Enterobacter sakazakii).